Here is a 214-residue protein sequence, read N- to C-terminus: tRNA (guanine-N(7)-)-methyltransferase (214 aa).

E44, E69, D96, and D118 together coordinate S-adenosyl-L-methionine. Residue D118 is part of the active site. K122 lines the substrate pocket. The segment at 124–129 (RHEKRR) is interaction with RNA. Substrate is bound by residues D154 and 192–195 (TEYE).

This sequence belongs to the class I-like SAM-binding methyltransferase superfamily. TrmB family.

The catalysed reaction is guanosine(46) in tRNA + S-adenosyl-L-methionine = N(7)-methylguanosine(46) in tRNA + S-adenosyl-L-homocysteine. It functions in the pathway tRNA modification; N(7)-methylguanine-tRNA biosynthesis. In terms of biological role, catalyzes the formation of N(7)-methylguanine at position 46 (m7G46) in tRNA. This Lactiplantibacillus plantarum (strain ATCC BAA-793 / NCIMB 8826 / WCFS1) (Lactobacillus plantarum) protein is tRNA (guanine-N(7)-)-methyltransferase.